The following is a 533-amino-acid chain: Probable intron-encoded endonuclease 3 (533 aa).

3 helical membrane-spanning segments follow: residues 1-21 (MYLS…FFGR), 30-50 (LITC…FFEV), and 81-101 (LTVA…IYSI). Residues 1–108 (MYLSIIILPL…YSISYMSHDP (108 aa)) are ndh-5 exon 1 encoded. The tract at residues 109–533 (RGRVRGKRVY…SISLLLGRRR (425 aa)) is ndh-5 intron 1 encoded.

The protein in the N-terminal section; belongs to the complex I subunit 5 family. In the C-terminal section; belongs to the LAGLIDADG endonuclease family.

It is found in the mitochondrion membrane. Its function is as follows. Mitochondrial DNA endonuclease involved in intron homing. The sequence is that of Probable intron-encoded endonuclease 3 from Neurospora crassa (strain ATCC 24698 / 74-OR23-1A / CBS 708.71 / DSM 1257 / FGSC 987).